The chain runs to 308 residues: Olfactory receptor 2D2 (308 aa).

At 1–25 the chain is on the extracellular side; that stretch reads MRQINQTQVTEFLLLGLSDGPHTEQ. N5 is a glycosylation site (N-linked (GlcNAc...) asparagine). The helical transmembrane segment at 26–49 threads the bilayer; sequence LLFIVLLGVYLVTVLGNLLLISLV. Over 50–57 the chain is Cytoplasmic; it reads HVDSQLHT. Residues 58–79 form a helical membrane-spanning segment; that stretch reads PMYFFLCNLSLADLCFSTNIVP. Residues 80–100 lie on the Extracellular side of the membrane; sequence QALVHLLSRKKVIAFTLCAAR. A helical transmembrane segment spans residues 101–120; that stretch reads LLFFLIFGCTQCALLAVMSY. The Cytoplasmic segment spans residues 121-139; sequence DRYVAICNPLRYPNIMTWK. The helical transmembrane segment at 140–158 threads the bilayer; that stretch reads VCVQLATGSWTSGILVSVV. At 159-195 the chain is on the extracellular side; the sequence is DTTFILRLPYRGSNSIAHFFCEAPALLILASTDTHAS. The chain crosses the membrane as a helical span at residues 196–219; that stretch reads EMAIFLMGVVILLIPVFLILVSYG. The Cytoplasmic portion of the chain corresponds to 220–236; it reads RIIVTVVKMKSTVGSLK. A helical transmembrane segment spans residues 237-259; sequence AFSTCGSHLMVVILFYGSAIITY. At 260 to 270 the chain is on the extracellular side; that stretch reads MTPKSSKQQEK. The helical transmembrane segment at 271-290 threads the bilayer; that stretch reads SVSVFYAIVTPMLNPLIYSL. Residues 291–308 lie on the Cytoplasmic side of the membrane; it reads RNKDVKAALRKVATRNFP.

It belongs to the G-protein coupled receptor 1 family.

The protein resides in the cell membrane. Its function is as follows. Odorant receptor. This is Olfactory receptor 2D2 (OR2D2) from Homo sapiens (Human).